The sequence spans 293 residues: GDT1-like protein 3 (293 aa).

Residues 1–25 (MGLISNPTRLILVATIFFLVSSISG) form the signal peptide. The next 6 helical transmembrane spans lie at 89 to 109 (FSMI…ALMA), 115 to 135 (ATVL…STGL), 148 to 168 (TNSA…YIAW), 200 to 220 (LFSR…FLAE), 238 to 258 (AIGV…LAVV), and 272 to 292 (VATV…FYPP).

This sequence belongs to the GDT1 family.

The protein localises to the membrane. In Arabidopsis thaliana (Mouse-ear cress), this protein is GDT1-like protein 3.